A 305-amino-acid polypeptide reads, in one-letter code: HTH-type transcriptional activator BauR (305 aa).

One can recognise an HTH lysR-type domain in the interval 15–72; sequence FDIRLLRIFKTIVECGSFSAAESTLGLSRSAISLHMGDLEKRLGMRLCQRGRAGFALT.

Belongs to the LysR transcriptional regulatory family.

In terms of biological role, involved in the degradation of beta-alanine. BauR activates the transcription of the bauABCD operon. In Pseudomonas aeruginosa (strain ATCC 15692 / DSM 22644 / CIP 104116 / JCM 14847 / LMG 12228 / 1C / PRS 101 / PAO1), this protein is HTH-type transcriptional activator BauR (bauR).